Consider the following 186-residue polypeptide: Casparian strip membrane protein 1 (186 aa).

Residues 1-26 (MKSSPAELISEAKSSTQNSKMKRAVS) lie on the Cytoplasmic side of the membrane. Residues 27–47 (VLDFILRLIAVVATLASAIAM) form a helical membrane-spanning segment. The Extracellular portion of the chain corresponds to 48 to 74 (GTTDESLPFFTQFIRFRAEYDDLPTLR). A helical transmembrane segment spans residues 75 to 95 (LFVVASAFASGYLILSLPLSI). Topologically, residues 96–107 (LHITRSSARRTR) are cytoplasmic. The chain crosses the membrane as a helical span at residues 108–128 (VILIILDMVMLTSLTAASSAA). Residues 129–161 (AAIVYLAHKGNAKANWFAFCQQYDSFCERISGS) lie on the Extracellular side of the membrane. Residues 162 to 182 (LIGSFIAIPLFIMLILFSALV) traverse the membrane as a helical segment. At 183-186 (LSKR) the chain is on the cytoplasmic side.

This sequence belongs to the Casparian strip membrane proteins (CASP) family. In terms of assembly, homodimer and heterodimers.

The protein resides in the cell membrane. Functionally, regulates membrane-cell wall junctions and localized cell wall deposition. Required for establishment of the Casparian strip membrane domain (CSD) and the subsequent formation of Casparian strips, a cell wall modification of the root endodermis that determines an apoplastic barrier between the intraorganismal apoplasm and the extraorganismal apoplasm and prevents lateral diffusion. The sequence is that of Casparian strip membrane protein 1 from Lotus japonicus (Lotus corniculatus var. japonicus).